Consider the following 218-residue polypeptide: Mitochondrial fission factor (218 aa).

Residues 1–198 (MAEISRIQYE…ENKERAKREM (198 aa)) lie on the Cytoplasmic side of the membrane. The residue at position 89 (Thr-89) is a Phosphothreonine. A phosphoserine mark is found at Ser-129, Ser-131, Ser-146, and Ser-171. A coiled-coil region spans residues 167 to 198 (VDAASLRRQIIKLNRRLQLLEEENKERAKREM). Residues 199-216 (VMYSITVAFWLLNSWLWF) traverse the membrane as a helical; Anchor for type IV membrane protein segment. Residues 217–218 (RR) are Mitochondrial intermembrane-facing.

It belongs to the Tango11 family. As to quaternary structure, homodimer. Interacts with DNM1L. Interacts with C11orf65/MFI; the interaction inhibits MFF interaction with DNM1L.

The protein resides in the mitochondrion outer membrane. The protein localises to the peroxisome. It is found in the cytoplasmic vesicle. It localises to the secretory vesicle. Its subcellular location is the synaptic vesicle. Plays a role in mitochondrial and peroxisomal fission. Promotes the recruitment and association of the fission mediator dynamin-related protein 1 (DNM1L) to the mitochondrial surface. May be involved in regulation of synaptic vesicle membrane dynamics by recruitment of DNM1L to clathrin-containing vesicles. The chain is Mitochondrial fission factor (Mff) from Rattus norvegicus (Rat).